Reading from the N-terminus, the 133-residue chain is Minor spike protein H (133 aa).

The protein belongs to the microviridae H protein family.

The protein localises to the virion. Functionally, probably triggers with protein G the injection of the phage DNA into the host upon conformational changes induced by virus-host receptor interaction. In Spiroplasma virus 4 (SpV4), this protein is Minor spike protein H.